The chain runs to 840 residues: Telomere length regulation protein TEL2 homolog (840 aa).

Met1 carries the N-acetylmethionine modification. A hydroxyproline mark is found at Pro374, Pro419, and Pro422. The tract at residues 443 to 497 (PEPAGDCSSVSRGPSPAPVDTESPVEMPEKAVESDVPPTQPQGSDSELDSDDEFI) is disordered. Phosphoserine is present on Ser457. Position 486 is a phosphoserine; by CK2 (Ser486). Phosphoserine occurs at positions 488, 492, and 837. Over residues 488-497 (SELDSDDEFI) the composition is skewed to acidic residues.

The protein belongs to the TEL2 family. Component of the TTT complex composed of TELO2, TTI1 and TTI2. Interacts with ATM, ATR, MTOR, PRKDC, RUVBL2, TTI1, TTI2, SMG1 and TRRAP. Component of the mTORC1 and mTORC2 complexes. Interacts (phosphorylated form) with PIH1D1. Interaction with PIH1D1 mediates interaction of TELO2 with the R2TP complex composed of RUVBL1, RUVBL2, PIH1D1, and RPAP3. Post-translationally, hydroxylation by PHD3 is required for a proper interaction with ATR, and activation of the ATR/CHK1/p53 pathway following DNA damage. In terms of processing, phosphorylated at Ser-486 by CK2 following growth factor deprivation, leading to its subsequent ubiquitination by the SCF(FBXO9) complex. Phosphorylation by CK2 only takes place when TELO2 is bound to mTORC1, not mTORC2; leading to selective ubiquitination of mTORC1-associated protein. Ubiquitinated by the SCF(FBXO9) complex following phosphorylation by CK2 in response to growth factor deprivation, leading to its degradation by the proteasome. Only mTORC1-associated protein is ubiquitinated and degraded, leading to selective inactivation of mTORC1 to restrain cell growth and protein translation, while mTORC2 is activated due to the relief of feedback inhibition by mTORC1.

It is found in the cytoplasm. The protein resides in the membrane. It localises to the nucleus. Its subcellular location is the chromosome. The protein localises to the telomere. In terms of biological role, regulator of the DNA damage response (DDR). Part of the TTT complex that is required to stabilize protein levels of the phosphatidylinositol 3-kinase-related protein kinase (PIKK) family proteins. The TTT complex is involved in the cellular resistance to DNA damage stresses, like ionizing radiation (IR), ultraviolet (UV) and mitomycin C (MMC). Together with the TTT complex and HSP90 may participate in the proper folding of newly synthesized PIKKs. Promotes assembly, stabilizes and maintains the activity of mTORC1 and mTORC2 complexes, which regulate cell growth and survival in response to nutrient and hormonal signals. May be involved in telomere length regulation. The sequence is that of Telomere length regulation protein TEL2 homolog (Telo2) from Mus musculus (Mouse).